The sequence spans 1052 residues: Mediator of RNA polymerase II transcription subunit 5 (1052 aa).

A disordered region spans residues 949–982 (GGDDEQREQHQQQQPDADQSNQGVVAPTGNTPGN). Positions 959 to 970 (QQQQPDADQSNQ) are enriched in low complexity.

The protein belongs to the Mediator complex subunit 5 family. As to quaternary structure, component of the Mediator complex.

The protein localises to the nucleus. Its function is as follows. Component of the Mediator complex, a coactivator involved in the regulated transcription of nearly all RNA polymerase II-dependent genes. Mediator functions as a bridge to convey information from gene-specific regulatory proteins to the basal RNA polymerase II transcription machinery. Mediator is recruited to promoters by direct interactions with regulatory proteins and serves as a scaffold for the assembly of a functional preinitiation complex with RNA polymerase II and the general transcription factors. The protein is Mediator of RNA polymerase II transcription subunit 5 (NUT1) of Coccidioides immitis (strain RS) (Valley fever fungus).